Consider the following 60-residue polypeptide: Histidine-rich metal-binding polypeptide (60 aa).

Residues Met-1–Glu-60 are disordered. Residues Gly-10–Ser-35 show a composition bias toward basic residues. Positions His-36–Glu-60 are enriched in basic and acidic residues. Repeat copies occupy residues Glu-38 to Cys-42 and Glu-51 to Cys-55. Residues Glu-38–Cys-55 are 2 X 5 AA repeats of E-E-G-C-C.

Strongly binds nickel and zinc. Binds other metals less strongly: cobalt &gt; copper &gt; cadmium &gt; manganese. May act to increase, or at least to preserve, urease activity. Exact function is still unknown. This chain is Histidine-rich metal-binding polypeptide (hpn), found in Helicobacter pylori (strain J99 / ATCC 700824) (Campylobacter pylori J99).